A 461-amino-acid polypeptide reads, in one-letter code: Kynureninase (461 aa).

Pyridoxal 5'-phosphate-binding positions include L114, T115, 142–145, D228, H231, and Y253; that span reads FPSD. K254 is modified (N6-(pyridoxal phosphate)lysine). 2 residues coordinate pyridoxal 5'-phosphate: W288 and N316.

Belongs to the kynureninase family. Homodimer. Pyridoxal 5'-phosphate serves as cofactor.

It is found in the cytoplasm. The enzyme catalyses L-kynurenine + H2O = anthranilate + L-alanine + H(+). It carries out the reaction 3-hydroxy-L-kynurenine + H2O = 3-hydroxyanthranilate + L-alanine + H(+). Its pathway is amino-acid degradation; L-kynurenine degradation; L-alanine and anthranilate from L-kynurenine: step 1/1. The protein operates within cofactor biosynthesis; NAD(+) biosynthesis; quinolinate from L-kynurenine: step 2/3. Functionally, catalyzes the cleavage of L-kynurenine (L-Kyn) and L-3-hydroxykynurenine (L-3OHKyn) into anthranilic acid (AA) and 3-hydroxyanthranilic acid (3-OHAA), respectively. This Lodderomyces elongisporus (strain ATCC 11503 / CBS 2605 / JCM 1781 / NBRC 1676 / NRRL YB-4239) (Yeast) protein is Kynureninase.